Consider the following 52-residue polypeptide: Conotoxin reg3h (52 aa).

A1 is a signal peptide. Positions L2–R33 are excised as a propeptide. Cystine bridges form between C35–C49, C36–C47, and C41–C50. A 4-hydroxyproline mark is found at P38, P48, and P51. Residue N52 is modified to Asparagine amide.

Expressed by the venom duct.

It localises to the secreted. The protein is Conotoxin reg3h of Conus regius (Crown cone).